We begin with the raw amino-acid sequence, 275 residues long: Fructose-2,6-bisphosphatase TIGAR (275 aa).

His11 serves as the catalytic Tele-phosphohistidine intermediate. Glu89 acts as the Proton donor/acceptor in catalysis.

This sequence belongs to the phosphoglycerate mutase family.

It localises to the cytoplasm. It is found in the nucleus. The protein localises to the mitochondrion. It carries out the reaction beta-D-fructose 2,6-bisphosphate + H2O = beta-D-fructose 6-phosphate + phosphate. Fructose-bisphosphatase hydrolyzing fructose-2,6-bisphosphate as well as fructose-1,6-bisphosphate. Acts as a negative regulator of glycolysis by lowering intracellular levels of fructose-2,6-bisphosphate in a p53/TP53-dependent manner, resulting in the pentose phosphate pathway (PPP) activation and NADPH production. Contributes to the generation of reduced glutathione to cause a decrease in intracellular reactive oxygen species (ROS) content, correlating with its ability to protect cells from oxidative or metabolic stress-induced cell death. May play a role in mitophagy inhibition. The sequence is that of Fructose-2,6-bisphosphatase TIGAR from Xenopus tropicalis (Western clawed frog).